Here is a 470-residue protein sequence, read N- to C-terminus: 6-phospho-beta-galactosidase (470 aa).

5 residues coordinate D-galactose 6-phosphate: Gln-19, His-116, Asn-159, Glu-160, and Asn-297. The Proton donor role is filled by Glu-160. Glu-375 (nucleophile) is an active-site residue. 4 residues coordinate D-galactose 6-phosphate: Ser-430, Trp-431, Lys-437, and Tyr-439.

This sequence belongs to the glycosyl hydrolase 1 family.

It catalyses the reaction a 6-phospho-beta-D-galactoside + H2O = D-galactose 6-phosphate + an alcohol. Its pathway is carbohydrate metabolism; lactose degradation; D-galactose 6-phosphate and beta-D-glucose from lactose 6-phosphate: step 1/1. In Staphylococcus epidermidis (strain ATCC 35984 / DSM 28319 / BCRC 17069 / CCUG 31568 / BM 3577 / RP62A), this protein is 6-phospho-beta-galactosidase.